We begin with the raw amino-acid sequence, 185 residues long: Ribosome-recycling factor (185 aa).

Belongs to the RRF family.

It localises to the cytoplasm. Responsible for the release of ribosomes from messenger RNA at the termination of protein biosynthesis. May increase the efficiency of translation by recycling ribosomes from one round of translation to another. The sequence is that of Ribosome-recycling factor from Pelobacter propionicus (strain DSM 2379 / NBRC 103807 / OttBd1).